Here is a 227-residue protein sequence, read N- to C-terminus: MVFGLSRAIRKAEKNAIIAELKVYSPKYGDLLKGRNPFEILRAYERAGAVGISYITDPKYFRGSFEFLRKLCRETELPVLRKDFIASKEEVERTAEAGASAVLLITRLLKEELPEFVDFAKEHGLDTLVEVHSEEELAIALQTDSTMIGINNRDIGKLELDDGNVSLTEKLAPLIPKRYVKVSESGIAGTEDLKRALRHADAALIGTALMKTPDPEEFLRKLVEVEV.

This sequence belongs to the TrpC family.

The enzyme catalyses 1-(2-carboxyphenylamino)-1-deoxy-D-ribulose 5-phosphate + H(+) = (1S,2R)-1-C-(indol-3-yl)glycerol 3-phosphate + CO2 + H2O. Its pathway is amino-acid biosynthesis; L-tryptophan biosynthesis; L-tryptophan from chorismate: step 4/5. The protein is Indole-3-glycerol phosphate synthase (trpC) of Thermococcus kodakarensis (strain ATCC BAA-918 / JCM 12380 / KOD1) (Pyrococcus kodakaraensis (strain KOD1)).